A 362-amino-acid polypeptide reads, in one-letter code: MSGKRVVVGMSGGVDSSVTAWLLKQQGYEVIGLFMKNWEDDDDSEYCSTRQDWLDVVSVADLIGVDVEAVNFAAEYKDRVFADFLREYSAGRTPNPDVLCNAEIKFKAFLDHAMSLGAETIATGHYARVRQNAAGRFELLKALDHTKDQSYFLHRLNQAQLSRTLFPLGEIPKTRVREIAAEIGLPNAKKKDSTGICFIGERPFRDFLNRYLPTKPGPMKTPDGKVVGEHIGLAFYTLGQRKGIGLGGSREGSGDAWYVARKDMASNTLYVVQGHDHPWLLTPTLVAADLSWVAGEPPLAGASMAAKTRYRQSDAPCVVDAADGDMLKLAFAEAQWAVTPGQSAVLYDGDVCLGGGIIQSAQ.

ATP is bound by residues 9–16 (GMSGGVDS) and methionine 35. An interaction with target base in tRNA region spans residues 95 to 97 (NPD). The Nucleophile role is filled by cysteine 100. Residues cysteine 100 and cysteine 197 are joined by a disulfide bond. Glycine 124 lines the ATP pocket. The tract at residues 147–149 (KDQ) is interaction with tRNA. Residue cysteine 197 is the Cysteine persulfide intermediate of the active site. Positions 309–310 (RY) are interaction with tRNA.

It belongs to the MnmA/TRMU family.

Its subcellular location is the cytoplasm. The catalysed reaction is S-sulfanyl-L-cysteinyl-[protein] + uridine(34) in tRNA + AH2 + ATP = 2-thiouridine(34) in tRNA + L-cysteinyl-[protein] + A + AMP + diphosphate + H(+). Its function is as follows. Catalyzes the 2-thiolation of uridine at the wobble position (U34) of tRNA, leading to the formation of s(2)U34. The protein is tRNA-specific 2-thiouridylase MnmA of Cupriavidus pinatubonensis (strain JMP 134 / LMG 1197) (Cupriavidus necator (strain JMP 134)).